We begin with the raw amino-acid sequence, 426 residues long: 3-phosphoshikimate 1-carboxyvinyltransferase (426 aa).

3 residues coordinate 3-phosphoshikimate: K21, S22, and R26. K21 is a binding site for phosphoenolpyruvate. Phosphoenolpyruvate is bound by residues G91 and R119. 6 residues coordinate 3-phosphoshikimate: S162, S163, Q164, S190, D304, and K331. Q164 is a phosphoenolpyruvate binding site. Catalysis depends on D304, which acts as the Proton acceptor. Phosphoenolpyruvate contacts are provided by R335, R377, and K403.

The protein belongs to the EPSP synthase family. Monomer.

The protein localises to the cytoplasm. It carries out the reaction 3-phosphoshikimate + phosphoenolpyruvate = 5-O-(1-carboxyvinyl)-3-phosphoshikimate + phosphate. It participates in metabolic intermediate biosynthesis; chorismate biosynthesis; chorismate from D-erythrose 4-phosphate and phosphoenolpyruvate: step 6/7. Functionally, catalyzes the transfer of the enolpyruvyl moiety of phosphoenolpyruvate (PEP) to the 5-hydroxyl of shikimate-3-phosphate (S3P) to produce enolpyruvyl shikimate-3-phosphate and inorganic phosphate. This chain is 3-phosphoshikimate 1-carboxyvinyltransferase, found in Clostridium kluyveri (strain ATCC 8527 / DSM 555 / NBRC 12016 / NCIMB 10680 / K1).